A 147-amino-acid chain; its full sequence is NADH-ubiquinone oxidoreductase chain 3 (147 aa).

Transmembrane regions (helical) follow at residues 6 to 26 (LFIL…LVFA), 60 to 80 (AICF…VGSL), and 84 to 104 (TFYS…GFVF).

Belongs to the complex I subunit 3 family.

It localises to the mitochondrion membrane. It carries out the reaction a ubiquinone + NADH + 5 H(+)(in) = a ubiquinol + NAD(+) + 4 H(+)(out). Its function is as follows. Core subunit of the mitochondrial membrane respiratory chain NADH dehydrogenase (Complex I) that is believed to belong to the minimal assembly required for catalysis. Complex I functions in the transfer of electrons from NADH to the respiratory chain. The immediate electron acceptor for the enzyme is believed to be ubiquinone. This Neurospora crassa (strain ATCC 24698 / 74-OR23-1A / CBS 708.71 / DSM 1257 / FGSC 987) protein is NADH-ubiquinone oxidoreductase chain 3 (ndh-3).